Consider the following 410-residue polypeptide: Trans-splicing factor Raa2, chloroplastic (410 aa).

Disordered regions lie at residues 1–40 and 56–106; these read MRTR…QRPA and AADH…QQQV. Residues 1–46 constitute a chloroplast transit peptide; sequence MRTRAGAFFGKQRSTSPSGSSTSASRQWLRSSPGRTQRPAAHRVLA. Positions 14–25 are enriched in low complexity; the sequence is STSPSGSSTSAS. Residues 26-35 show a composition bias toward polar residues; it reads RQWLRSSPGR. A compositionally biased stretch (low complexity) spans 96–106; it reads RQAQRRQQQQV.

This sequence belongs to the pseudouridine synthase TruB family. Possibly associated with other factors required for trans-splicing.

It is found in the plastid. It localises to the chloroplast. Required for trans-splicing of exons 2 and 3 of the chloroplast encoded psaA mRNA (a group II intron). It is not known if this protein has pseudouridine activity; mutation of the potential active site residue does not cause loss of trans-splicing. In Chlamydomonas reinhardtii (Chlamydomonas smithii), this protein is Trans-splicing factor Raa2, chloroplastic (RAA2).